The chain runs to 310 residues: Succinate dehydrogenase assembly factor 2, mitochondrial (310 aa).

Over residues L35–A48 the composition is skewed to basic and acidic residues. The tract at residues L35 to S67 is disordered. Over residues N52–S67 the composition is skewed to polar residues.

The protein belongs to the SDHAF2 family. In terms of assembly, interacts with the flavoprotein subunit within the SDH catalytic dimer.

The protein localises to the mitochondrion matrix. Its function is as follows. Plays an essential role in the assembly of succinate dehydrogenase (SDH), an enzyme complex (also referred to as respiratory complex II) that is a component of both the tricarboxylic acid (TCA) cycle and the mitochondrial electron transport chain, and which couples the oxidation of succinate to fumarate with the reduction of ubiquinone (coenzyme Q) to ubiquinol. Required for flavinylation (covalent attachment of FAD) of the flavoprotein subunit of the SDH catalytic dimer. In Penicillium rubens (strain ATCC 28089 / DSM 1075 / NRRL 1951 / Wisconsin 54-1255) (Penicillium chrysogenum), this protein is Succinate dehydrogenase assembly factor 2, mitochondrial.